The following is a 186-amino-acid chain: MASPSKAVIVPGNGGGDVTTHGWYGWVKKELEKIPGFQCLAKNMPDPITARESIWLPFMETELHCDEKTIIIGHSSGAIAAMRYAETHRVYAIVLVSAYTSDLGDENERASGYFTRPWQWEKIKANCPYIVQFGSTDDPFLPWKEQQEVADRLETKLHKFTDCGHFQNTEFHELITVVKSLLKVPA.

Residues 63-67 are involved in binding to RB1; the sequence is LHCDE. Catalysis depends on charge relay system residues serine 75, aspartate 138, and histidine 165.

Belongs to the RBBP9 family. Interacts with RB1; the interaction disrupts RB1 binding to E2F1. Interacts with RBL1 and RBL2. As to expression, expressed at higher levels in tumor tissues such as carcinoma.

The catalysed reaction is valacyclovir + H2O = acyclovir + L-valine + H(+). With respect to regulation, inhibited by the natural product emetine produced by the ipecac root. In terms of biological role, serine hydrolase. Catalyzes the hydrolytic activation of amino acid ester of the antiviral prodrug valacyclovir to its corresponding active drug, acyclovir. May negatively regulate basal or autocrine TGF-beta signaling by suppressing SMAD2-SMAD3 phosphorylation. May play a role in the transformation process due to its capacity to confer resistance to the growth-inhibitory effects of TGF-beta through interaction with RB1 and the subsequent displacement of E2F1. In Homo sapiens (Human), this protein is Serine hydrolase RBBP9.